We begin with the raw amino-acid sequence, 287 residues long: tRNA uridine(34) hydroxylase (287 aa).

The Rhodanese domain occupies 132-226 (QGRPVVMLDT…YFEEVGGAHY (95 aa)). C186 acts as the Cysteine persulfide intermediate in catalysis.

This sequence belongs to the TrhO family.

It catalyses the reaction uridine(34) in tRNA + AH2 + O2 = 5-hydroxyuridine(34) in tRNA + A + H2O. In terms of biological role, catalyzes oxygen-dependent 5-hydroxyuridine (ho5U) modification at position 34 in tRNAs. The polypeptide is tRNA uridine(34) hydroxylase (Paraburkholderia phytofirmans (strain DSM 17436 / LMG 22146 / PsJN) (Burkholderia phytofirmans)).